A 265-amino-acid polypeptide reads, in one-letter code: Aquaporin-5 (265 aa).

Residues 1–12 lie on the Cytoplasmic side of the membrane; that stretch reads MKKEVCSVAFFK. Residues 13–33 form a helical membrane-spanning segment; that stretch reads AVFAEFLATLIFVFFGLGSAL. Residues 34–39 lie on the Extracellular side of the membrane; the sequence is KWPSAL. A helical transmembrane segment spans residues 40–60; it reads PTILQISIAFGLAIGTLAQAL. The Cytoplasmic portion of the chain corresponds to 61–65; the sequence is GPVSG. The segment at residues 66-74 is an intramembrane region (discontinuously helical); it reads GHINPAITL. Residues 69–71 carry the NPA 1 motif; it reads NPA. Topologically, residues 75–87 are cytoplasmic; that stretch reads ALLIGNQISLLRA. The helical transmembrane segment at 88-108 threads the bilayer; it reads IFYVAAQLVGAIAGAGILYWL. Residues 109–126 are Extracellular-facing; that stretch reads APGNARGNLAVNALSNNT. N124 is a glycosylation site (N-linked (GlcNAc...) asparagine). The chain crosses the membrane as a helical span at residues 127 to 147; sequence TPGKAVVVELILTFQLALCIF. Residues 148-158 lie on the Cytoplasmic side of the membrane; the sequence is SSTDSRRTSPV. The helical transmembrane segment at 159-179 threads the bilayer; that stretch reads GSPALSIGLSVTLGHLVGIYF. Position 180 (T180) is a topological domain, extracellular. Positions 181–191 form an intramembrane region, discontinuously helical; it reads GCSMNPARSFG. The short motif at 185-187 is the NPA 2 element; that stretch reads NPA. Topologically, residues 192 to 203 are extracellular; that stretch reads PAVVMNRFSPSH. The helical transmembrane segment at 204–224 threads the bilayer; it reads WVFWVGPIVGAVLAAILYFYL. The Cytoplasmic segment spans residues 225 to 265; the sequence is LFPSSLSLHDRVAVVKGTYEPEEDWEDHREERKKTIELTAH.

It belongs to the MIP/aquaporin (TC 1.A.8) family. Homotetramer; each monomer provides an independent water pore. Interacts with TRPV4; the interaction is probably indirect and regulates TRPV4 activation by hypotonicity. Detected at the luminal membrane of secretory epithelial cells in hindpaw sweat glands. Detected in acinar cells in salivary glands, in duct cells in lacrimal glands and in lung (at protein level). Detected in lung, parotid, submandibular, sublingual, and lacrimal gland tissues.

It localises to the apical cell membrane. Its subcellular location is the cell membrane. It is found in the cytoplasmic vesicle membrane. The catalysed reaction is H2O(in) = H2O(out). In terms of biological role, aquaporins form homotetrameric transmembrane channels, with each monomer independently mediating water transport across the plasma membrane along its osmotic gradient. Plays an important role in fluid secretion in salivary glands. Required for TRPV4 activation by hypotonicity. Together with TRPV4, controls regulatory volume decrease in salivary epithelial cells. Seems to play a redundant role in water transport in the eye, lung and in sweat glands. This is Aquaporin-5 from Mus musculus (Mouse).